A 444-amino-acid chain; its full sequence is Acyl-CoA 6-desaturase (444 aa).

The Cytoplasmic portion of the chain corresponds to 1–130 (MGKGGNQGEG…EDMNLFKTNH (130 aa)). The Cytochrome b5 heme-binding domain maps to 18–95 (MPTFRWEEIQ…LKPLLIGELA (78 aa)). The helical transmembrane segment at 131 to 151 (LFFFLLLSHIIVMESIAWFIL) threads the bilayer. The Lumenal segment spans residues 152 to 157 (SYFGNG). A helical transmembrane segment spans residues 158 to 178 (WIPTVITAFVLATSQAQAGWL). The Cytoplasmic segment spans residues 179–264 (QHDYGHLSVY…KYLPYNHQHE (86 aa)). Positions 180–184 (HDYGH) match the Histidine box-1 motif. The Histidine box-2 motif lies at 217–221 (HFQHH). The chain crosses the membrane as a helical span at residues 265–285 (YFFLIGPPLLIPMYFQYQIIM). Over 286 to 305 (TMIRRRDWVDLAWAISYYAR) the chain is Lumenal. Residues 306–326 (FFYTYIPFYGILGALVFLNFI) form a helical membrane-spanning segment. Residues 327–444 (RFLESHWFVW…ELWLDAYLHK (118 aa)) lie on the Cytoplasmic side of the membrane. The short motif at 382–386 (QIEHH) is the Histidine box-3 element.

The protein belongs to the fatty acid desaturase type 1 family. As to expression, expressed in the liver and brain (at protein level). Highest activity is found in the liver and adrenals followed by the testes and other organs, absent in adipose tissue.

Its subcellular location is the endoplasmic reticulum membrane. It is found in the microsome membrane. The enzyme catalyses (9Z,12Z)-octadecadienoyl-CoA + 2 Fe(II)-[cytochrome b5] + O2 + 2 H(+) = (6Z,9Z,12Z)-octadecatrienoyl-CoA + 2 Fe(III)-[cytochrome b5] + 2 H2O. The catalysed reaction is (9Z,12Z,15Z)-octadecatrienoyl-CoA + 2 Fe(II)-[cytochrome b5] + O2 + 2 H(+) = (6Z,9Z,12Z,15Z)-octadecatetraenoyl-CoA + 2 Fe(III)-[cytochrome b5] + 2 H2O. It carries out the reaction (9Z,12Z,15Z,18Z,21Z)-tetracosapentaenoyl-CoA + 2 Fe(II)-[cytochrome b5] + O2 + 2 H(+) = (6Z,9Z,12Z,15Z,18Z,21Z)-tetracosahexaenoyl-CoA + 2 Fe(III)-[cytochrome b5] + 2 H2O. It catalyses the reaction (11E)-octadecenoyl-CoA + 2 Fe(II)-[cytochrome b5] + O2 + 2 H(+) = (6Z,11E)-octadecadienoyl-CoA + 2 Fe(III)-[cytochrome b5] + 2 H2O. The enzyme catalyses (11Z,14Z)-eicosadienoyl-CoA + 2 Fe(II)-[cytochrome b5] + O2 + 2 H(+) = (8Z,11Z,14Z)-eicosatrienoyl-CoA + 2 Fe(III)-[cytochrome b5] + 2 H2O. The catalysed reaction is (11Z,14Z,17Z)-eicosatrienoyl-CoA + 2 Fe(II)-[cytochrome b5] + O2 + 2 H(+) = (8Z,11Z,14Z,17Z)-eicosatetraenoyl-CoA + 2 Fe(III)-[cytochrome b5] + 2 H2O. The protein operates within lipid metabolism; polyunsaturated fatty acid biosynthesis. Its function is as follows. Involved in the biosynthesis of highly unsaturated fatty acids (HUFA) from the essential polyunsaturated fatty acids (PUFA) linoleic acid (LA) (18:2n-6) and alpha-linolenic acid (ALA) (18:3n-3) precursors, acting as a fatty acyl-coenzyme A (CoA) desaturase that introduces a cis double bond at carbon 6 of the fatty acyl chain. Catalyzes the first and rate limiting step in this pathway which is the desaturation of LA (18:2n-6) and ALA (18:3n-3) into gamma-linoleate (GLA) (18:3n-6) and stearidonate (18:4n-3), respectively. Subsequently, in the biosynthetic pathway of HUFA n-3 series, it desaturates tetracosapentaenoate (24:5n-3) to tetracosahexaenoate (24:6n-3), which is then converted to docosahexaenoate (DHA)(22:6n-3), an important lipid for nervous system function. It can also desaturate (11E)-octadecenoate (trans-vaccenoate) at carbon 6 generating (6Z,11E)-octadecadienoate. In addition to Delta-6 activity, this enzyme exhibits Delta-8 activity with slight biases toward n-3 fatty acyl-CoA substrates. The protein is Acyl-CoA 6-desaturase (Fads2) of Rattus norvegicus (Rat).